Reading from the N-terminus, the 284-residue chain is ATP phosphoribosyltransferase (284 aa).

This sequence belongs to the ATP phosphoribosyltransferase family. Long subfamily. Equilibrium between an active dimeric form, an inactive hexameric form and higher aggregates. Interconversion between the various forms is largely reversible and is influenced by the natural substrates and inhibitors of the enzyme. The cofactor is Mg(2+).

Its subcellular location is the cytoplasm. It catalyses the reaction 1-(5-phospho-beta-D-ribosyl)-ATP + diphosphate = 5-phospho-alpha-D-ribose 1-diphosphate + ATP. It participates in amino-acid biosynthesis; L-histidine biosynthesis; L-histidine from 5-phospho-alpha-D-ribose 1-diphosphate: step 1/9. With respect to regulation, feedback inhibited by histidine. Its function is as follows. Catalyzes the condensation of ATP and 5-phosphoribose 1-diphosphate to form N'-(5'-phosphoribosyl)-ATP (PR-ATP). Has a crucial role in the pathway because the rate of histidine biosynthesis seems to be controlled primarily by regulation of HisG enzymatic activity. This is ATP phosphoribosyltransferase from Mycobacterium avium (strain 104).